Here is a 337-residue protein sequence, read N- to C-terminus: WAT1-related protein At1g11460 (337 aa).

10 helical membrane-spanning segments follow: residues 14-34 (WPPI…NALV), 46-66 (IIGA…AYIL), 83-103 (FISG…GLSY), 107-127 (TVAC…ALIL), 139-159 (AGMI…FLTF), 188-208 (WLLG…WILF), 220-240 (FSST…LSLY), 254-274 (FVIG…TVSV), 284-304 (VFVS…DFII), and 309-329 (LYLG…VFLW). The EamA 1 domain maps to 27 to 157 (MGSVNALVKK…IICISGALFL (131 aa)). Residues 220–328 (FSSTCLMSIF…GTITGLYVFL (109 aa)) form the EamA 2 domain.

It belongs to the drug/metabolite transporter (DMT) superfamily. Plant drug/metabolite exporter (P-DME) (TC 2.A.7.4) family.

It localises to the membrane. The sequence is that of WAT1-related protein At1g11460 from Arabidopsis thaliana (Mouse-ear cress).